The sequence spans 2057 residues: Fer-1-like protein 5 (2057 aa).

7 C2 domains span residues 1 to 99, 152 to 265, 308 to 425, 1057 to 1188, 1213 to 1346, 1467 to 1587, and 1705 to 1853; these read MLRL…VLFV, PGST…TLLR, DDTD…EGVY, DTRP…MRWH, KLGE…AQDY, PKPP…AHCG, and GPPG…KQCS. Asp-1502, Asp-1508, Asp-1557, Phe-1558, Asp-1559, Ser-1562, Asp-1565, Asp-1824, Ser-1827, and Asp-1830 together coordinate Ca(2+). A helical transmembrane segment spans residues 1962-1982; it reads LIAFMVISIIALMLFNFIYSA.

This sequence belongs to the ferlin family. Interacts (via second C2 domain) with EHD1 and EHD2. Ca(2+) serves as cofactor.

The protein resides in the cell membrane. Its subcellular location is the membrane. Its function is as follows. Plays a role in myoblast fusion; probable mediator of endocytic recycling for membrane trafficking events during myotube formation. This Homo sapiens (Human) protein is Fer-1-like protein 5 (FER1L5).